Here is a 557-residue protein sequence, read N- to C-terminus: Formate--tetrahydrofolate ligase 2 (557 aa).

Position 66 to 73 (66 to 73 (TPAGEGKT)) interacts with ATP.

It belongs to the formate--tetrahydrofolate ligase family.

It catalyses the reaction (6S)-5,6,7,8-tetrahydrofolate + formate + ATP = (6R)-10-formyltetrahydrofolate + ADP + phosphate. The protein operates within one-carbon metabolism; tetrahydrofolate interconversion. The protein is Formate--tetrahydrofolate ligase 2 of Streptococcus pyogenes serotype M6 (strain ATCC BAA-946 / MGAS10394).